Reading from the N-terminus, the 522-residue chain is Sorting nexin-1 (522 aa).

Disordered regions lie at residues 1–84 (MASG…QDQE) and 115–142 (SLPP…QEDQ). Serine 32 and serine 39 each carry phosphoserine. Acidic residues predominate over residues 35-45 (EAGDSDTEGED). Phosphothreonine occurs at positions 41 and 48. Residues 55–73 (KHQSPKITTSLLPINNGSK) are compositionally biased toward polar residues. 2 positions are modified to phosphoserine: serine 58 and serine 72. Residues 132-142 (EELEEEEQEDQ) are compositionally biased toward acidic residues. In terms of domain architecture, PX spans 143–272 (FDLTVGITDP…EFLEKEELPR (130 aa)). Positions 186, 188, and 214 each coordinate a 1,2-diacyl-sn-glycero-3-phospho-(1D-myo-inositol-3-phosphate). A Phosphoserine modification is found at serine 188. The residue at position 237 (lysine 237) is an N6-acetyllysine. Position 238 (arginine 238) interacts with a 1,2-diacyl-sn-glycero-3-phospho-(1D-myo-inositol-3-phosphate). The residue at position 280 (serine 280) is a Phosphoserine. The tract at residues 281–298 (GAGLLKMFNKATDAVSKM) is membrane-binding amphipathic helix. A BAR domain is found at 302–522 (MNESDIWFEE…AFLPEAKAIS (221 aa)).

This sequence belongs to the sorting nexin family. In terms of assembly, predominantly forms heterodimers with BAR domain-containing sorting nexins SNX5, SNX6 and SNX32; can self-associate to form homodimers. The heterodimers are proposed to self-assemble into helical arrays on the membrane to stabilize and expand local membrane curvature underlying endosomal tubule formation. Thought to be a component of the originally described retromer complex (also called SNX-BAR retromer) which is a pentamer containing the heterotrimeric retromer cargo-selective complex (CSC), also described as vacuolar protein sorting subcomplex (VPS) and a heterodimeric membrane-deforming subcomplex formed between SNX1 or SNX2 and SNX5 or SNX6 (also called SNX-BAR subcomplex); the respective CSC and SNX-BAR subcomplexes associate with low affinity. Interacts with SNX5, SNX6, SNX32, VPS26A, VPS29, VPS35, DRD5, DENND5A, KALRN, RHOG (GDP-bound form). The interaction with SNX2 is reported controversially. Interacts with DNAJC13; prevented by presence of HGS. Interacts with HGS.

It is found in the endosome membrane. The protein resides in the golgi apparatus. The protein localises to the trans-Golgi network membrane. It localises to the early endosome membrane. Its subcellular location is the cell projection. It is found in the lamellipodium. Its function is as follows. Involved in several stages of intracellular trafficking. Interacts with membranes containing phosphatidylinositol 3-phosphate (PtdIns(3P)) or phosphatidylinositol 3,5-bisphosphate (PtdIns(3,5)P2). Acts in part as component of the retromer membrane-deforming SNX-BAR subcomplex. The SNX-BAR retromer mediates retrograde transport of cargo proteins from endosomes to the trans-Golgi network (TGN) and is involved in endosome-to-plasma membrane transport for cargo protein recycling. The SNX-BAR subcomplex functions to deform the donor membrane into a tubular profile called endosome-to-TGN transport carrier (ETC). Can sense membrane curvature and has in vitro vesicle-to-membrane remodeling activity. Involved in retrograde endosome-to-TGN transport of lysosomal enzyme receptors (IGF2R, M6PR and SORT1) and Shiginella dysenteria toxin stxB. Plays a role in targeting ligand-activated EGFR to the lysosomes for degradation after endocytosis from the cell surface and release from the Golgi. Involvement in retromer-independent endocytic trafficking of P2RY1 and lysosomal degradation of protease-activated receptor-1/F2R. Promotes KALRN- and RHOG-dependent but retromer-independent membrane remodeling such as lamellipodium formation; the function is dependent on GEF activity of KALRN. Required for endocytosis of DRD5 upon agonist stimulation but not for basal receptor trafficking. This chain is Sorting nexin-1 (SNX1), found in Homo sapiens (Human).